The primary structure comprises 548 residues: MALLNNQDEIVRPVANFSPSLWGDRFHSFSLDNQVADKYAQQIETLKEQTRSLLSDAACGTTLAEKLNLIDIVERLGLAYHFEKQIEDMLDQIYKADPNFEAHDLNTLSLQFRILRQHGYNISQKIFSRFQDANGKFKESLSNDIKGLLNLYEASHVRTHGEDILEEALAFSTAHLESAAPHLKSPLSKQVTHALEQSLHKSIPRVETRYFISIYEEEEFKNDVLLRFAKLDYNLLQMLHKQELSEVSRWWKDLDFVTTLPYARDRAVECYFWTMGVYAEPQYSQARVMLAKTIAMISIVDDTFDAYGIVKELEVYTDAIQRWDISQMDRLPEYMKVSFKALLDLYEDYEKELSKDGRSDVVQYAKERMKEIVRNYFVEAKWFIEGYMPPVSEYLSNALATSTYYLLTTTSYLGVKSATKEDFEWLAKNPKILEANVTLCRVVDDIATYEVEKGRGQIATGIECYMRDYGVSTQVAMDKFQEMAEIAWKDVNEGILRPTPVSTEILTRILNLARIIDVTYKHNQDGYTHPEKVLKPHIIALLVDSIEI.

The Mg(2+) site is built by Asp-301, Asp-305, Asp-444, Thr-448, and Glu-452. The DDXXD motif motif lies at 301 to 305; it reads DDTFD.

Belongs to the terpene synthase family. Tpsa subfamily. It depends on Mg(2+) as a cofactor. In terms of tissue distribution, expressed in stem and leaf trichomes. Detected in roots, fruits and flowers.

It is found in the cytoplasm. The enzyme catalyses (2E,6E)-farnesyl diphosphate = viridiflorene + diphosphate. Its pathway is secondary metabolite biosynthesis; terpenoid biosynthesis. Its function is as follows. Sesquiterpene synthase involved in the production of viridiflorene from (E,E)-farnesyl diphosphate. Can also use (Z,Z)-FPP to make several unidentified sesquiterpenes. The chain is Viridiflorene synthase from Solanum lycopersicum (Tomato).